The chain runs to 526 residues: MHMETVFRKSTHGGVVKQDIKIKASEEGFVEDINDLKVEKERKSIHNEDDNSKSSQQKDLTGDKKDDQLESAKADMEEVMEENQRLKKHLDKIMKDYRNLQMQFHEVAQRDAEKTNTDVKHDEAELVSLSLGRTSSDTKKELSKLILSKKENDEKEEDNLTLALDCKFQSSTKSSPSNLSPENSLGEVKDDEKGTDQTWPPHKVLKTIRNEEDDVTQQNPTKRAKVSVRVRCDTPTMNDGCQWRKYGQKIAKGNPCPRAYYRCTVAPNCPVRKQVQRCIQDMSILITTYEGTHNHPLPHSATSMAFTTSAAASMLLSGSSSSGSGPTSSTASATTSALNYCFSDNSKPNPFYNLPHSSISSSSHSQYPTITLDLTSNSSTSSFPGQNYRTIANSNNYPPRYNNNNSSTNILNFSSFESNHLLPMSWSNRNNQDTHSQSYLQNNIKSAASTQTLLPQDTIAAATKAITSDPKFQSALAVALTSIIGSRSGNHHIDEKSGQNMKVTEPFPVLCSFPSTSPGDHKDYTL.

Basic and acidic residues-rich tracts occupy residues Lys40–Ser52 and Leu60–Met76. Disordered regions lie at residues Lys40–Met76 and Ser170–Pro200. The stretch at Gly62–Glu106 forms a coiled coil. Positions Ser170–Leu185 are enriched in low complexity. The WRKY DNA-binding region spans Cys232–Pro298.

This sequence belongs to the WRKY group II-b family. In terms of tissue distribution, expressed in roots, trichomes and fruits.

It is found in the nucleus. Transcription activator involved in the transcriptional regulation of terpene biosynthesis in glandular trichomes. Binds to the promoter of the linalool synthase TPS5 and promotes TPS5 gene transactivation. In association with WRKY72B, contributes to basal defense against root-knot nematodes (RKNs) and potato aphids, as well as Mi-1-mediated gene-for-gene resistance to these pests. Both WRKY72A and WRKY72B are not required for gene-for-gene resistance mediated by Pto, another tomato R gene. The sequence is that of WRKY transcription factor 72A from Solanum lycopersicum (Tomato).